Reading from the N-terminus, the 229-residue chain is Somatolactin (229 aa).

A signal peptide spans 1–24; sequence MHLVSVIQRGVWAVLLWPNLLASS. 3 cysteine pairs are disulfide-bonded: Cys29–Cys39, Cys87–Cys203, and Cys220–Cys228. 2 N-linked (GlcNAc...) asparagine glycosylation sites follow: Asn143 and Asn175.

It belongs to the somatotropin/prolactin family.

The protein resides in the secreted. The protein is Somatolactin of Cyclopterus lumpus (Lumpsucker).